A 282-amino-acid polypeptide reads, in one-letter code: UPF0761 membrane protein HAPS_1376 (282 aa).

6 consecutive transmembrane segments (helical) span residues Leu32–Phe52, Met89–Asp109, Val124–Ala144, Leu170–Val190, Val202–Ile222, and Ala234–Leu254.

This sequence belongs to the UPF0761 family.

It localises to the cell inner membrane. This is UPF0761 membrane protein HAPS_1376 from Glaesserella parasuis serovar 5 (strain SH0165) (Haemophilus parasuis).